The chain runs to 266 residues: UPF0294 protein YafD (266 aa).

This sequence belongs to the UPF0294 family.

Its subcellular location is the cytoplasm. The polypeptide is UPF0294 protein YafD (Salmonella dublin (strain CT_02021853)).